A 60-amino-acid chain; its full sequence is Ribosome biogenesis protein Nop10 (60 aa).

Belongs to the NOP10 family.

In terms of biological role, involved in ribosome biogenesis; more specifically in 18S rRNA pseudouridylation and in cleavage of pre-rRNA. This chain is Ribosome biogenesis protein Nop10, found in Haloquadratum walsbyi (strain DSM 16790 / HBSQ001).